An 820-amino-acid chain; its full sequence is MNISYNWLKEYVNFDLTPDETAAALTSIGLETGGVEEVQTIKGGLEGLVIGEVLTCEEHPNSDHLHITTVNLGDGEPVQIVCGAPNVAAGQKVVVATLGTKLYDGDECFTIKKSKIRGVESTGMICAEDEIGIGTDHAGIIVLPAEAVPGTLAKDYYNIKSDYVLEVDITPNRADACSHYGVARDLYAYLIQNGKQATLQRPSVDGFKVENHDLDIEVVVENSEACPHYAGVTVKGVTVKESPEWLQNKLRLIGVRPINNVVDITNYIVHAFGQPLHCFDAGKIKGNEVIVKTLPEGTPFVTLDEVERKLSERDLMICNKEEAMCIAGVFGGLDSGSTEATTDVFIESAYFHPTWVRKTARRHGLNTDASFRFERGIDPNGVIYCLKLAALMVKELAGGTISSEIKDVCVAVPQDFMVELSYEKVNSLIGKVIPVETIKSIVTSLEMKIMNETVDGLTLAVPPYRVDVQRDCDVIEDILRIYGYNNVEIPTTLNSSLTTKGEHDKSNKLQNLVAEQLVGCGFNEILNNSLTRAAYYDGLENYSSNHLVMLLNPLSADLNCMRQTLLFGGLESIAHNANRKNADLKFFEFGNCYYFDADKKNPEKVLATYSEDYHLGLWVTGKKVANSWAHPDENSSVYELKAYVENILKRLGLDLHNLVVGNLTDDIFATALSVHTKGGKRLASFGVVTKKLLKAFDIDNEVYYADLNWKELMKAIRSVKISYKEISKFPAVKRDLALLLDKNVQFAEIEKIAYDTEKKLLKEVELFDVYEGKNIEAGKKSYAVSFLLQDETQTLNDKMIDKIMSKLVKNLEDKLNAKLR.

A tRNA-binding domain is found at 42–154; sequence KGGLEGLVIG…AEAVPGTLAK (113 aa). Residues 413–489 form the B5 domain; sequence PQDFMVELSY…RIYGYNNVEI (77 aa). Mg(2+) is bound by residues Asp-467, Asp-473, Glu-476, and Asp-477. In terms of domain architecture, FDX-ACB spans 727-820; it reads SKFPAVKRDL…LEDKLNAKLR (94 aa).

Belongs to the phenylalanyl-tRNA synthetase beta subunit family. Type 1 subfamily. Tetramer of two alpha and two beta subunits. Mg(2+) serves as cofactor.

The protein resides in the cytoplasm. The catalysed reaction is tRNA(Phe) + L-phenylalanine + ATP = L-phenylalanyl-tRNA(Phe) + AMP + diphosphate + H(+). This is Phenylalanine--tRNA ligase beta subunit from Bacteroides thetaiotaomicron (strain ATCC 29148 / DSM 2079 / JCM 5827 / CCUG 10774 / NCTC 10582 / VPI-5482 / E50).